The following is a 532-amino-acid chain: Probable NAD kinase 1 (532 aa).

Over residues 1–26 (MSLDELPHKVSDERVNHDTVTSHESE) the composition is skewed to basic and acidic residues. The disordered stretch occupies residues 1–32 (MSLDELPHKVSDERVNHDTVTSHESEIGSGSI).

Belongs to the NAD kinase family.

The catalysed reaction is NAD(+) + ATP = ADP + NADP(+) + H(+). The protein is Probable NAD kinase 1 of Oryza sativa subsp. japonica (Rice).